Consider the following 465-residue polypeptide: uncharacterized protein (465 aa).

11 helical membrane-spanning segments follow: residues 19-39 (VLGP…GEYM), 50-70 (MIAG…VAMI), 91-111 (IVGP…YTML), 140-160 (FIVL…LATL), 164-184 (LVIT…VQFG), 201-221 (PYGW…YLGI), 244-264 (AGIM…SGLM), 288-308 (LMVL…NGCI), 342-362 (IVFL…DQVV), 363-383 (TFSI…MVMF), and 403-423 (LPTV…FLGY).

This sequence belongs to the amino acid-polyamine-organocation (APC) superfamily.

It localises to the cell membrane. Functionally, probable amino-acid or metabolite transport protein. This is an uncharacterized protein from Rhizobium meliloti (strain 1021) (Ensifer meliloti).